A 452-amino-acid polypeptide reads, in one-letter code: MSQILTTRQAEELHKSMVAYLSSLEASKSTAALREELVLPDTFDDATCKKYAGLLEKKFLTCSLKANPSKDNGLSALQILDLESKVAGLQAELSSLTLTSRSKGGQDPDNWLPGPASTRTFESHRDAITCIAFHPIFTSLASSSEDCTIKIWDWELGELERTLKGHIRAVTGLDFGGQKGNTLLASCSSDLTVKLWDPSKGYANIRTLSGHDHSVSAVRFLTSTENLLVSAGRDASIRIWDVSTGYCVKVLRSSDAWIRDISSSFDGKWLVAGGRDQAVTVWEVATAEQKSALLGHENYIECCVIAPPTSYEHLATLAGLKKPPAPSSSCEFIATGARDKTIRLWESRGRLIKTLVGHDNWVRDLVFHPNGKHLISVADDKTIRCWDLSQEGKLVKTIDNAHSHFVTCMRWGPSATTDVETTNGVTNKGTTKSKFQCVIATGSADSCVRVFS.

Residues A76–R101 are a coiled coil. 7 WD repeats span residues S123–K164, H166–R206, G210–V250, S253–A292, G295–L355, G357–K396, and A401–R449.

The protein belongs to the WD repeat LIS1/nudF family. Self-associates. Interacts with nudE and dynein.

The protein localises to the cytoplasm. It localises to the cytoskeleton. Its subcellular location is the spindle pole. Its function is as follows. Positively regulates the activity of the minus-end directed microtubule motor protein dynein. May enhance dynein-mediated microtubule sliding by targeting dynein to the microtubule plus end. Required for nuclear migration during vegetative growth as well as development. Required for retrograde early endosome (EE) transport from the hyphal tip. Required for localization of dynein to the mitotic spindle poles. Recruits additional proteins to the dynein complex at SPBs. This is Nuclear distribution protein nudF 2 from Talaromyces marneffei (strain ATCC 18224 / CBS 334.59 / QM 7333) (Penicillium marneffei).